We begin with the raw amino-acid sequence, 250 residues long: Transmembrane protein 106C (250 aa).

Residues 1–25 form a disordered region; the sequence is MGSQHSAAARPSSCRRKQEDDRDGL. Gly2 is lipidated: N-myristoyl glycine. Over residues 16–25 the composition is skewed to basic and acidic residues; it reads RKQEDDRDGL. A helical transmembrane segment spans residues 87–107; sequence YVLLSILLCLLASGLVVFFLF. N-linked (GlcNAc...) asparagine glycosylation is found at Asn173 and Asn186. The chain crosses the membrane as a helical span at residues 197-217; it reads FSYVYFFCTVPEILVHNIVIF.

It belongs to the TMEM106 family. As to quaternary structure, interacts with TMEM106B.

The protein localises to the endoplasmic reticulum membrane. It localises to the membrane. The sequence is that of Transmembrane protein 106C (TMEM106C) from Homo sapiens (Human).